Consider the following 71-residue polypeptide: Protein DP71L (71 aa).

2 important for host CHOP inhibition regions span residues 16-18 (VRF) and 57-61 (LSAVL).

It belongs to the asfivirus DP71L family. As to quaternary structure, interacts (via C-terminus) with host PPP1CB.

Its function is as follows. Interacts with the host phosphatase PP1 catalytic subunit (PPP1CB) and recruits it to dephosphorylate EIF2S1/eIF2alpha and therefore restores the host translation that has been shut-down by the host. Also inhibits the EIF2S1/eIF2alpha-ATF4-DDIT3/CHOP pathway. The protein is Protein DP71L of Ornithodoros (relapsing fever ticks).